The primary structure comprises 78 residues: D-alanyl carrier protein (78 aa).

Positions 1–78 (MEFKEQVLDL…KIVEALEELR (78 aa)) constitute a Carrier domain. At Ser36 the chain carries O-(pantetheine 4'-phosphoryl)serine.

This sequence belongs to the DltC family. In terms of processing, 4'-phosphopantetheine is transferred from CoA to a specific serine of apo-DCP.

The protein localises to the cytoplasm. It functions in the pathway cell wall biogenesis; lipoteichoic acid biosynthesis. In terms of biological role, carrier protein involved in the D-alanylation of lipoteichoic acid (LTA). The loading of thioester-linked D-alanine onto DltC is catalyzed by D-alanine--D-alanyl carrier protein ligase DltA. The DltC-carried D-alanyl group is further transferred to cell membrane phosphatidylglycerol (PG) by forming an ester bond, probably catalyzed by DltD. D-alanylation of LTA plays an important role in modulating the properties of the cell wall in Gram-positive bacteria, influencing the net charge of the cell wall. The chain is D-alanyl carrier protein from Staphylococcus haemolyticus (strain JCSC1435).